A 90-amino-acid chain; its full sequence is Long neurotoxin 1 (90 aa).

The first 21 residues, 1 to 21, serve as a signal peptide directing secretion; the sequence is MKTLLLTLVVVTIVCLDVGNS. 5 disulfides stabilise this stretch: cysteine 24–cysteine 42, cysteine 35–cysteine 63, cysteine 48–cysteine 52, cysteine 67–cysteine 78, and cysteine 79–cysteine 84.

The protein belongs to the three-finger toxin family. Long-chain subfamily. Type II alpha-neurotoxin sub-subfamily. As to expression, expressed by the venom gland.

It localises to the secreted. In terms of biological role, binds with high affinity to muscular (alpha-1/CHRNA1) and neuronal (alpha-7/CHRNA7) nicotinic acetylcholine receptor (nAChR) and inhibits acetylcholine from binding to the receptor, thereby impairing neuromuscular and neuronal transmission. This Austrelaps superbus (Lowland copperhead snake) protein is Long neurotoxin 1.